Consider the following 405-residue polypeptide: Aspartokinase (405 aa).

ACT domains are found at residues 267–344 (VSME…AKVS) and 345–405 (IVGV…QLDQ).

The protein belongs to the aspartokinase family.

It catalyses the reaction L-aspartate + ATP = 4-phospho-L-aspartate + ADP. It participates in amino-acid biosynthesis; L-lysine biosynthesis via DAP pathway; (S)-tetrahydrodipicolinate from L-aspartate: step 1/4. Its pathway is amino-acid biosynthesis; L-methionine biosynthesis via de novo pathway; L-homoserine from L-aspartate: step 1/3. The protein operates within amino-acid biosynthesis; L-threonine biosynthesis; L-threonine from L-aspartate: step 1/5. The sequence is that of Aspartokinase (lysC) from Helicobacter pylori (strain J99 / ATCC 700824) (Campylobacter pylori J99).